A 377-amino-acid polypeptide reads, in one-letter code: Dihydroorotate dehydrogenase (quinone) (377 aa).

FMN contacts are provided by residues 82 to 86 (AGFDK) and Thr-106. Lys-86 serves as a coordination point for substrate. 131–135 (NRMGF) is a binding site for substrate. The FMN site is built by Asn-159 and Asn-192. Asn-192 is a substrate binding site. Ser-195 (nucleophile) is an active-site residue. Asn-197 contacts substrate. 2 residues coordinate FMN: Lys-228 and Thr-256. 257–258 (NT) serves as a coordination point for substrate. Residues Gly-282, Gly-311, and 332 to 333 (YT) each bind FMN.

This sequence belongs to the dihydroorotate dehydrogenase family. Type 2 subfamily. As to quaternary structure, monomer. The cofactor is FMN.

The protein resides in the cell membrane. The catalysed reaction is (S)-dihydroorotate + a quinone = orotate + a quinol. It participates in pyrimidine metabolism; UMP biosynthesis via de novo pathway; orotate from (S)-dihydroorotate (quinone route): step 1/1. Functionally, catalyzes the conversion of dihydroorotate to orotate with quinone as electron acceptor. The sequence is that of Dihydroorotate dehydrogenase (quinone) from Corynebacterium efficiens (strain DSM 44549 / YS-314 / AJ 12310 / JCM 11189 / NBRC 100395).